The primary structure comprises 39 residues: Photosystem II reaction center protein L (39 aa).

The chain crosses the membrane as a helical span at residues 16 to 37 (RTSLYLGLLLVAVLGILFSSYF).

It belongs to the PsbL family. As to quaternary structure, PSII is composed of 1 copy each of membrane proteins PsbA, PsbB, PsbC, PsbD, PsbE, PsbF, PsbH, PsbI, PsbJ, PsbK, PsbL, PsbM, PsbT, PsbX, PsbY, PsbZ, Psb30/Ycf12, peripheral proteins PsbO, CyanoQ (PsbQ), PsbU, PsbV and a large number of cofactors. It forms dimeric complexes.

The protein resides in the cellular thylakoid membrane. One of the components of the core complex of photosystem II (PSII). PSII is a light-driven water:plastoquinone oxidoreductase that uses light energy to abstract electrons from H(2)O, generating O(2) and a proton gradient subsequently used for ATP formation. It consists of a core antenna complex that captures photons, and an electron transfer chain that converts photonic excitation into a charge separation. This subunit is found at the monomer-monomer interface and is required for correct PSII assembly and/or dimerization. Required for PSII activity, at least in part due to its effects on PSII assembly. May make specific contact(s) with lipids. This Synechocystis sp. (strain ATCC 27184 / PCC 6803 / Kazusa) protein is Photosystem II reaction center protein L.